A 951-amino-acid chain; its full sequence is Protein translocase subunit SecA (951 aa).

ATP is bound by residues Gln90, 108–112 (GEGKT), and Asp509.

This sequence belongs to the SecA family. In terms of assembly, monomer and homodimer. Part of the essential Sec protein translocation apparatus which comprises SecA, SecYEG and auxiliary proteins SecDF. Other proteins may also be involved.

The protein localises to the cell inner membrane. It is found in the cellular thylakoid membrane. The protein resides in the cytoplasm. The enzyme catalyses ATP + H2O + cellular proteinSide 1 = ADP + phosphate + cellular proteinSide 2.. Part of the Sec protein translocase complex. Interacts with the SecYEG preprotein conducting channel. Has a central role in coupling the hydrolysis of ATP to the transfer of proteins into and across the cell membrane, serving as an ATP-driven molecular motor driving the stepwise translocation of polypeptide chains across the membrane. Functionally, probably participates in protein translocation into and across both the cytoplasmic and thylakoid membranes in cyanobacterial cells. The sequence is that of Protein translocase subunit SecA from Prochlorococcus marinus (strain MIT 9303).